Consider the following 268-residue polypeptide: L-aspartate dehydrogenase (268 aa).

NAD(+)-binding residues include Ala125 and Asn191. His221 is a catalytic residue.

This sequence belongs to the L-aspartate dehydrogenase family.

The enzyme catalyses L-aspartate + NADP(+) + H2O = oxaloacetate + NH4(+) + NADPH + H(+). The catalysed reaction is L-aspartate + NAD(+) + H2O = oxaloacetate + NH4(+) + NADH + H(+). The protein operates within cofactor biosynthesis; NAD(+) biosynthesis; iminoaspartate from L-aspartate (dehydrogenase route): step 1/1. Its function is as follows. Specifically catalyzes the NAD or NADP-dependent dehydrogenation of L-aspartate to iminoaspartate. In Ralstonia nicotianae (strain ATCC BAA-1114 / GMI1000) (Ralstonia solanacearum), this protein is L-aspartate dehydrogenase.